The primary structure comprises 97 residues: Large ribosomal subunit protein eL21 (97 aa).

The interval 1 to 24 (MQKSEGFRSKTRYKLQKHPRQKGM) is disordered. Basic residues predominate over residues 9-21 (SKTRYKLQKHPRQ).

It belongs to the eukaryotic ribosomal protein eL21 family.

The protein is Large ribosomal subunit protein eL21 of Methanococcus maripaludis (strain DSM 14266 / JCM 13030 / NBRC 101832 / S2 / LL).